Reading from the N-terminus, the 499-residue chain is MNAPESLPVEFPVFDNSFAALPEAFYTRLEPHPLPEPYVVGVSTEVADLLGLPAELMNSPQFAEIFAGNRLLPGSEPLAAVYSGHQFGVWAGQLGDGRAHLLGGLRNDQGHWEIQLKGAGRTPYSRGADGRAVLRSSIREFLCSEAMAGLGVPTTRALCVIGADQPVRREEIETAALVARVAPGFVRFGSFEHWASRDRSRELQQLADYVIDTFRPACRDAENPYDALLRDISRRTGELIAHWMAVGFMHGVMNTDNMSILGLTLDYGPFGFMEAFDAGHICNHSDHQGRYTYRNQPHVAQWNLYCLADAFLPLLKHPDISRVAVDETYGDAFAQTFERLMCAKLGLRHALPDDENFIGETFGFLQQHRPDFTLFFRRLSRLSGGLDGEAMAKADAPLRDLFVDRAACDAWLANWRARLAQTPWDDGERQASMLAANPKYVLRNWLAEAAIRKAKLKDYSDVQRLLTCLRRPYDEQPEFDDLAALPPDWASGLEVSCSS.

ATP contacts are provided by G95, G97, R98, K117, D129, G130, R180, and R187. D256 functions as the Proton acceptor in the catalytic mechanism. Residues N257 and D266 each contribute to the Mg(2+) site. D266 serves as a coordination point for ATP.

Belongs to the SELO family. Mg(2+) serves as cofactor. The cofactor is Mn(2+).

It carries out the reaction L-seryl-[protein] + ATP = 3-O-(5'-adenylyl)-L-seryl-[protein] + diphosphate. The catalysed reaction is L-threonyl-[protein] + ATP = 3-O-(5'-adenylyl)-L-threonyl-[protein] + diphosphate. The enzyme catalyses L-tyrosyl-[protein] + ATP = O-(5'-adenylyl)-L-tyrosyl-[protein] + diphosphate. It catalyses the reaction L-histidyl-[protein] + UTP = N(tele)-(5'-uridylyl)-L-histidyl-[protein] + diphosphate. It carries out the reaction L-seryl-[protein] + UTP = O-(5'-uridylyl)-L-seryl-[protein] + diphosphate. The catalysed reaction is L-tyrosyl-[protein] + UTP = O-(5'-uridylyl)-L-tyrosyl-[protein] + diphosphate. In terms of biological role, nucleotidyltransferase involved in the post-translational modification of proteins. It can catalyze the addition of adenosine monophosphate (AMP) or uridine monophosphate (UMP) to a protein, resulting in modifications known as AMPylation and UMPylation. The protein is Protein nucleotidyltransferase YdiU of Dechloromonas aromatica (strain RCB).